The following is a 304-amino-acid chain: D-tagatose-1-phosphate kinase (304 aa).

Asp250 acts as the Proton acceptor in catalysis.

It belongs to the carbohydrate kinase PfkB family. Mg(2+) is required as a cofactor.

The enzyme catalyses alpha-D-tagatopyranose 1-phosphate + ATP = D-tagatofuranose 1,6-bisphosphate + ADP + H(+). The protein operates within carbohydrate degradation. In terms of biological role, kinase involved in a D-tagatose catabolic pathway. Catalyzes the phosphorylation of D-tagatose-1-phosphate (Tag-1P) to D-tagatose-1,6-bisphosphate. This is D-tagatose-1-phosphate kinase from Klebsiella oxytoca.